The chain runs to 272 residues: Sulfur carrier protein FdhD (272 aa).

C114 (cysteine persulfide intermediate) is an active-site residue.

It belongs to the FdhD family.

The protein resides in the cytoplasm. Required for formate dehydrogenase (FDH) activity. Acts as a sulfur carrier protein that transfers sulfur from IscS to the molybdenum cofactor prior to its insertion into FDH. This is Sulfur carrier protein FdhD from Mycolicibacterium paratuberculosis (strain ATCC BAA-968 / K-10) (Mycobacterium paratuberculosis).